We begin with the raw amino-acid sequence, 404 residues long: S-adenosylmethionine synthase (404 aa).

His17 is a binding site for ATP. Asp19 is a Mg(2+) binding site. Glu45 contributes to the K(+) binding site. The L-methionine site is built by Glu58 and Gln101. Residues 101–111 (QSPDINRGVDR) are flexible loop. Residues 172 to 174 (DAK), 245 to 246 (RF), Asp254, 260 to 261 (RK), Ala277, and Lys281 each bind ATP. Position 254 (Asp254) interacts with L-methionine. L-methionine is bound at residue Lys285.

It belongs to the AdoMet synthase family. Homotetramer; dimer of dimers. Requires Mg(2+) as cofactor. It depends on K(+) as a cofactor.

It is found in the cytoplasm. The catalysed reaction is L-methionine + ATP + H2O = S-adenosyl-L-methionine + phosphate + diphosphate. It functions in the pathway amino-acid biosynthesis; S-adenosyl-L-methionine biosynthesis; S-adenosyl-L-methionine from L-methionine: step 1/1. Functionally, catalyzes the formation of S-adenosylmethionine (AdoMet) from methionine and ATP. The overall synthetic reaction is composed of two sequential steps, AdoMet formation and the subsequent tripolyphosphate hydrolysis which occurs prior to release of AdoMet from the enzyme. This is S-adenosylmethionine synthase from Pelodictyon phaeoclathratiforme (strain DSM 5477 / BU-1).